A 94-amino-acid polypeptide reads, in one-letter code: Cell division topological specificity factor (94 aa).

This sequence belongs to the MinE family.

In terms of biological role, prevents the cell division inhibition by proteins MinC and MinD at internal division sites while permitting inhibition at polar sites. This ensures cell division at the proper site by restricting the formation of a division septum at the midpoint of the long axis of the cell. The chain is Cell division topological specificity factor from Hamiltonella defensa subsp. Acyrthosiphon pisum (strain 5AT).